We begin with the raw amino-acid sequence, 400 residues long: MLEFFSRLSLVTKIIIAIILGIGVALLFPTVTPYLSLFGELFIKALKSVAPILAFVLVLSSIANFQVGHSANLRPVLLLYVVGMLLAAFSAVIASLSFPSTLYLNTVSHNNLQAPGSLADILKNLLLSFIANPVQAISEANFIGILAWAIGLGLAMRHSSDTTKQVMQDVSHAVSAIIHKVIAFAPVGIFGLVAVTFADAGLATLESYAQLLAVLLGTMLFVALVINPILVGLTIRGNPYPLVFKCLKESGITAFFTRSSAANIPVNLDLAERLGVNPSTASVSIPLGATVNLAGAAVTITVLTLATVHTLGIHVDLATMIILSVVATVSACGASGVAGGSLLLIPVACSLFGISSEIAMQVVAVGMIISVLQDSTETALNSSTDVLFTAAVDIRSRQNS.

The next 8 membrane-spanning stretches (helical) occupy residues 14-34 (IIIAIILGIGVALLFPTVTPY), 48-68 (SVAPILAFVLVLSSIANFQVG), 76-96 (VLLLYVVGMLLAAFSAVIASL), 136-156 (AISEANFIGILAWAIGLGLAM), 177-197 (IIHKVIAFAPVGIFGLVAVTF), 211-231 (LLAVLLGTMLFVALVINPILV), 293-313 (LAGAAVTITVLTLATVHTLGI), and 334-354 (ASGVAGGSLLLIPVACSLFGI).

Belongs to the dicarboxylate/amino acid:cation symporter (DAACS) (TC 2.A.23) family.

Its subcellular location is the cell inner membrane. The catalysed reaction is L-serine(in) + Na(+)(in) = L-serine(out) + Na(+)(out). It catalyses the reaction L-threonine(in) + Na(+)(in) = L-threonine(out) + Na(+)(out). Functionally, involved in the import of serine and threonine into the cell, with the concomitant import of sodium (symport system). This Acinetobacter baumannii (strain SDF) protein is Serine/threonine transporter SstT.